Here is a 162-residue protein sequence, read N- to C-terminus: Nucleotide-binding protein Adeh_0094 (162 aa).

Belongs to the YajQ family.

Its function is as follows. Nucleotide-binding protein. The sequence is that of Nucleotide-binding protein Adeh_0094 from Anaeromyxobacter dehalogenans (strain 2CP-C).